The following is a 267-amino-acid chain: Mitochondrial S-adenosylmethionine carrier protein (267 aa).

Solcar repeat units lie at residues 4 to 77 (REFT…TKSV), 86 to 168 (LAPI…LKAV), and 177 to 265 (LDSW…VRRT). The next 6 membrane-spanning stretches (helical) occupy residues 5-25 (EFTA…LTLF), 49-69 (IYAG…AFFV), 85-105 (NLAP…ACLI), 142-162 (RGYG…FPLW), 182-202 (AAVC…PLDV), and 238-258 (FAGS…FLGA).

This sequence belongs to the mitochondrial carrier (TC 2.A.29) family.

It is found in the mitochondrion inner membrane. It carries out the reaction S-adenosyl-L-homocysteine(out) + S-adenosyl-L-methionine(in) = S-adenosyl-L-homocysteine(in) + S-adenosyl-L-methionine(out). Functionally, mitochondrial S-adenosyl-L-methionine/S-adenosyl-L-homocysteine antiporter. Mediates the exchange of cytosolic S-adenosyl-L-methionine, the predominant methyl-group donor for macromolecule methylation processes, for mitochondrial S-adenosylhomocysteine(SAH), a by-product of methylation reactions. This Danio rerio (Zebrafish) protein is Mitochondrial S-adenosylmethionine carrier protein (slc25a26).